Consider the following 364-residue polypeptide: Probable dual-specificity RNA methyltransferase RlmN (364 aa).

Residue Glu-107 is the Proton acceptor of the active site. A Radical SAM core domain is found at 113–346; sequence HEYGNSVCVT…ATIRREQGAD (234 aa). A disulfide bridge links Cys-120 with Cys-351. [4Fe-4S] cluster contacts are provided by Cys-127, Cys-131, and Cys-134. S-adenosyl-L-methionine-binding positions include 177 to 178, Ser-209, 232 to 234, and Asn-308; these read GE and SLH. Cys-351 (S-methylcysteine intermediate) is an active-site residue.

This sequence belongs to the radical SAM superfamily. RlmN family. Requires [4Fe-4S] cluster as cofactor.

Its subcellular location is the cytoplasm. The catalysed reaction is adenosine(2503) in 23S rRNA + 2 reduced [2Fe-2S]-[ferredoxin] + 2 S-adenosyl-L-methionine = 2-methyladenosine(2503) in 23S rRNA + 5'-deoxyadenosine + L-methionine + 2 oxidized [2Fe-2S]-[ferredoxin] + S-adenosyl-L-homocysteine. It carries out the reaction adenosine(37) in tRNA + 2 reduced [2Fe-2S]-[ferredoxin] + 2 S-adenosyl-L-methionine = 2-methyladenosine(37) in tRNA + 5'-deoxyadenosine + L-methionine + 2 oxidized [2Fe-2S]-[ferredoxin] + S-adenosyl-L-homocysteine. Functionally, specifically methylates position 2 of adenine 2503 in 23S rRNA and position 2 of adenine 37 in tRNAs. Confers resistance to some classes of antibiotics. The chain is Probable dual-specificity RNA methyltransferase RlmN from Staphylococcus saprophyticus subsp. saprophyticus (strain ATCC 15305 / DSM 20229 / NCIMB 8711 / NCTC 7292 / S-41).